A 255-amino-acid polypeptide reads, in one-letter code: Mediator of RNA polymerase II transcription subunit 18 (255 aa).

It belongs to the Mediator complex subunit 18 family. As to quaternary structure, component of the Mediator complex.

Its subcellular location is the nucleus. Component of the Mediator complex, a coactivator involved in the regulated transcription of nearly all RNA polymerase II-dependent genes. Mediator functions as a bridge to convey information from gene-specific regulatory proteins to the basal RNA polymerase II transcription machinery. Mediator is recruited to promoters by direct interactions with regulatory proteins and serves as a scaffold for the assembly of a functional preinitiation complex with RNA polymerase II and the general transcription factors. In Kluyveromyces lactis (strain ATCC 8585 / CBS 2359 / DSM 70799 / NBRC 1267 / NRRL Y-1140 / WM37) (Yeast), this protein is Mediator of RNA polymerase II transcription subunit 18 (SRB5).